The primary structure comprises 361 residues: Heme A synthase (361 aa).

8 helical membrane-spanning segments follow: residues 22–42, 109–129, 139–159, 175–195, 208–228, 269–289, 303–323, and 324–344; these read LWVR…VLVG, LLAR…WVTG, LLGI…MVAS, HLTI…GLAP, FAFW…LVAG, FVHR…AIAT, VLLF…LLMV, and VPMD…GFAT. His271 is a heme binding site. His332 is a binding site for heme.

The protein belongs to the COX15/CtaA family. Type 2 subfamily. In terms of assembly, interacts with CtaB. Requires heme b as cofactor.

The protein localises to the cell membrane. It carries out the reaction Fe(II)-heme o + 2 A + H2O = Fe(II)-heme a + 2 AH2. It participates in porphyrin-containing compound metabolism; heme A biosynthesis; heme A from heme O: step 1/1. Catalyzes the conversion of heme O to heme A by two successive hydroxylations of the methyl group at C8. The first hydroxylation forms heme I, the second hydroxylation results in an unstable dihydroxymethyl group, which spontaneously dehydrates, resulting in the formyl group of heme A. The polypeptide is Heme A synthase (Chelativorans sp. (strain BNC1)).